Reading from the N-terminus, the 161-residue chain is 2-C-methyl-D-erythritol 2,4-cyclodiphosphate synthase (161 aa).

Residues Asp14 and His16 each coordinate a divalent metal cation. 4-CDP-2-C-methyl-D-erythritol 2-phosphate-binding positions include 14–16 (DVH) and 40–41 (HS). His48 contributes to the a divalent metal cation binding site. 4-CDP-2-C-methyl-D-erythritol 2-phosphate is bound by residues 62-64 (DLG), Phe142, and Arg145.

It belongs to the IspF family. As to quaternary structure, homotrimer. Requires a divalent metal cation as cofactor.

It catalyses the reaction 4-CDP-2-C-methyl-D-erythritol 2-phosphate = 2-C-methyl-D-erythritol 2,4-cyclic diphosphate + CMP. It functions in the pathway isoprenoid biosynthesis; isopentenyl diphosphate biosynthesis via DXP pathway; isopentenyl diphosphate from 1-deoxy-D-xylulose 5-phosphate: step 4/6. Involved in the biosynthesis of isopentenyl diphosphate (IPP) and dimethylallyl diphosphate (DMAPP), two major building blocks of isoprenoid compounds. Catalyzes the conversion of 4-diphosphocytidyl-2-C-methyl-D-erythritol 2-phosphate (CDP-ME2P) to 2-C-methyl-D-erythritol 2,4-cyclodiphosphate (ME-CPP) with a corresponding release of cytidine 5-monophosphate (CMP). This Acidothermus cellulolyticus (strain ATCC 43068 / DSM 8971 / 11B) protein is 2-C-methyl-D-erythritol 2,4-cyclodiphosphate synthase.